The following is a 186-amino-acid chain: Tumor necrosis factor alpha-induced protein 8-like protein 1 (186 aa).

Residues 37 to 70 adopt a coiled-coil conformation; the sequence is EVLDELYRVTKEYTRNRKEAQKIIKNLIKMVVKL.

Belongs to the TNFAIP8 family.

Its subcellular location is the cytoplasm. The protein is Tumor necrosis factor alpha-induced protein 8-like protein 1 (tnfaip8l1) of Danio rerio (Zebrafish).